Consider the following 420-residue polypeptide: MEGYTTLPSTATLKPSPFTVSISESKLQTLQDLIRLSPIGPADYNNSSPSTGSKYGIRRDWLINAKKQWEDNFSWRTFEKKLKKYPQYTVPVKGESGETIEIHFIALFSQRQDARPLAFYHGWPSSPFDFLPILDLLTNKYTPETLPYHIIVPSLPGFCFSGSPPIDLDYDMPQAAYLLNNLMIGLGLDGYIAQGGDLGSGISREQAAGCEACKGFHLNMILLPPPANMKELTLEEVEKKAMPNALAFRQSGMAYALEHGTRGGTIGLALQASPVALLCWIGEKMMAWSDSSSQPSLEQILETVSLYWLTDSITRGLYPYRRFASGNEPKINFIEKPLGYSFFPNTYLPCPVSWAKTTANLVQYRRHESGGHFAPWERPRELLEDVEEYVDVAFGKKDSPMMGPKAVEDVSGSGSHARGL.

It belongs to the peptidase S33 family.

It participates in mycotoxin biosynthesis. Functionally, putative epoxide hydrolase; part of the fragmented gene cluster that mediates the biosynthesis of dothistromin (DOTH), a polyketide toxin very similar in structure to the aflatoxin precursor, versicolorin B. The first step of the pathway is the conversion of acetate to norsolorinic acid (NOR) and requires the fatty acid synthase subunits hexA and hexB, as well as the polyketide synthase pksA. PksA combines a hexanoyl starter unit and 7 malonyl-CoA extender units to synthesize the precursor NOR. The hexanoyl starter unit is provided to the acyl-carrier protein (ACP) domain by the fungal fatty acid synthase hexA/hexB. The second step is the conversion of NOR to averantin (AVN) and requires the norsolorinic acid ketoreductase nor1, which catalyzes the dehydration of norsolorinic acid to form (1'S)-averantin. The cytochrome P450 monooxygenase avnA then catalyzes the hydroxylation of AVN to 5'hydroxyaverantin (HAVN). The next step is performed by adhA that transforms HAVN to averufin (AVF). Averufin might then be converted to hydroxyversicolorone by cypX and avfA. Hydroxyversicolorone is further converted versiconal hemiacetal acetate (VHA) by moxY. VHA is then the substrate for the versiconal hemiacetal acetate esterase est1 to yield versiconal (VAL). Versicolorin B synthase vbsA then converts VAL to versicolorin B (VERB) by closing the bisfuran ring. Then, the activity of the versicolorin B desaturase verB leads to versicolorin A (VERA). DotB, a predicted chloroperoxidase, may perform epoxidation of the A-ring of VERA. Alternatively, a cytochrome P450, such as cypX or avnA could catalyze this step. It is also possible that another, uncharacterized, cytochrome P450 enzyme is responsible for this step. Opening of the epoxide could potentially be achieved by the epoxide hydrolase epoA. However, epoA seems not to be required for DOTH biosynthesis, but other epoxide hydrolases may have the ability to complement this hydrolysis. Alternatively, opening of the epoxide ring could be achieved non-enzymatically. The next step is the deoxygenation of ring A to yield the 5,8-dihydroxyanthraquinone which is most likely catalyzed by the NADPH dehydrogenase encoded by ver1. The last stages of DOTH biosynthesis are proposed to involve hydroxylation of the bisfuran. OrdB and norB might have oxidative roles here. An alternative possibility is that cytochrome P450 monoogenases such as avnA and cypX might perform these steps in addition to previously proposed steps. The protein is Putative epoxide hydrolase of Dothistroma septosporum (Red band needle blight fungus).